A 370-amino-acid chain; its full sequence is Putative agmatine deiminase (370 aa).

The Amidino-cysteine intermediate role is filled by Cys-361.

Belongs to the agmatine deiminase family.

It catalyses the reaction agmatine + H2O = N-carbamoylputrescine + NH4(+). This chain is Putative agmatine deiminase, found in Shewanella baltica (strain OS185).